Reading from the N-terminus, the 393-residue chain is Double-stranded RNA-binding protein 5 (393 aa).

2 consecutive DRBM domains span residues 1–70 (MYKN…VLSS) and 87–155 (IYKN…SLKK). Disordered regions lie at residues 220 to 251 (ASSS…KSSK) and 335 to 371 (NPNL…QEKK). A compositionally biased stretch (polar residues) spans 347-361 (VNEFTSSNNSCSVLN).

As to quaternary structure, heterodimer with DRB1, DRB2 or DRB4. Interacts with DCL1 and DCL3. As to expression, expressed in the shoot apical meristem (SAM).

Its function is as follows. Binds double-stranded RNA. May be involved in RNA-mediated silencing. This is Double-stranded RNA-binding protein 5 (DRB5) from Arabidopsis thaliana (Mouse-ear cress).